The following is a 1114-amino-acid chain: Putative surface protein SAV2496/SAV2497 (1114 aa).

Positions 1 to 50 (MRDKKGPVNKRVDFLSNKLNKYSIRKFTVGTASILIGSLMYLGTQQEAEA) are cleaved as a signal peptide. 3 disordered regions span residues 76–116 (TNKD…EDTP), 440–473 (KFNPDLAPGTEKVTREGQKGEKTITTPTLKNPLT), and 496–1088 (EYGP…TGLE). Basic and acidic residues-rich tracts occupy residues 96-116 (DTIEHEASVKAEDISKKEDTP), 451-461 (KVTREGQKGEK), 505-523 (GHRDEFDPKLPTGEKEEVP), 554-570 (SIVEKEEIPFEKERKFN), and 579-589 (KVTREGQKGEK). A G5 1 domain is found at 419-501 (SAKNNNRIRK…NELTEYGPET (83 aa)). Residues 547–628 (YGPVKGDSIV…NELTEYGPET (82 aa)) form the G5 2 domain. A compositionally biased stretch (low complexity) spans 590–604 (TTTPTLKNPLTGEII). Basic and acidic residues-rich tracts occupy residues 605 to 618 (SKGESKEEITKDPI), 632 to 650 (GHRDEFDPKLPTGEKEEVP), 681 to 697 (SIVEKEEIPFKKERKFN), 706 to 716 (KVTREGQKGEK), 733 to 746 (SKGESKEEITKDPI), 760 to 778 (GHRDEFDPKLPTGEKEEVP), 809 to 825 (SIVEKEEIPFEKERKFN), 834 to 844 (KVTREGQKGEK), 861 to 874 (SKGESKEEITKDPV), 918 to 929 (KVIEEPVDDVIK), and 946 to 965 (FETKREFNPKLQPGEERVKQ). One can recognise a G5 3 domain in the interval 674-756 (YGPVKGDSIV…NELTEYGPET (83 aa)). Residues 802-884 (YGPVKGDSIV…NELTEFGGEK (83 aa)) enclose the G5 4 domain. The G5 5 domain maps to 930–1012 (HGPKTGTPET…DKIVEFGGEK (83 aa)). The span at 968–982 (QPGSKTITTPITVNP) shows a compositional bias: polar residues. The segment covering 996–1026 (EITKQPVDKIVEFGGEKPKDPKGPENPEKPS) has biased composition (basic and acidic residues). An LPXTG sorting signal motif is present at residues 1082–1086 (LPKTG). Position 1085 is a pentaglycyl murein peptidoglycan amidated threonine (threonine 1085). Residues 1086–1114 (GLESTQKGLIFSSIIGIAGLMLLARRRKN) constitute a propeptide, removed by sortase.

It localises to the secreted. The protein localises to the cell wall. This Staphylococcus aureus (strain Mu50 / ATCC 700699) protein is Putative surface protein SAV2496/SAV2497.